The primary structure comprises 110 residues: Protein YcgL (110 aa).

Positions 14 to 98 (MFCVIYRSSK…PPEDLLKQHL (85 aa)) constitute a YcgL domain. Positions 87–110 (PPPPEDLLKQHLSSVGQNTSPADR) are disordered. Residues 97 to 110 (HLSSVGQNTSPADR) are compositionally biased toward polar residues.

The protein is Protein YcgL of Salmonella choleraesuis (strain SC-B67).